The chain runs to 506 residues: Maturase K (506 aa).

This sequence belongs to the intron maturase 2 family. MatK subfamily.

The protein resides in the plastid. The protein localises to the chloroplast. Functionally, usually encoded in the trnK tRNA gene intron. Probably assists in splicing its own and other chloroplast group II introns. The protein is Maturase K of Prunus dulcis (Almond).